Here is a 141-residue protein sequence, read N- to C-terminus: Large ribosomal subunit protein uL11 (141 aa).

The protein belongs to the universal ribosomal protein uL11 family. Part of the ribosomal stalk of the 50S ribosomal subunit. Interacts with L10 and the large rRNA to form the base of the stalk. L10 forms an elongated spine to which L12 dimers bind in a sequential fashion forming a multimeric L10(L12)X complex. One or more lysine residues are methylated.

Its function is as follows. Forms part of the ribosomal stalk which helps the ribosome interact with GTP-bound translation factors. In Synechocystis sp. (strain ATCC 27184 / PCC 6803 / Kazusa), this protein is Large ribosomal subunit protein uL11.